The primary structure comprises 301 residues: Thyrotroph embryonic factor (301 aa).

2 disordered regions span residues 1–70 and 130–174; these read MSDA…ASTM and ESAS…DPSC. At serine 30 the chain carries Phosphoserine. Basic and acidic residues predominate over residues 39-59; sequence KLMENPPRETRLDKEKGKEKL. The segment covering 131–158 has biased composition (low complexity); sequence SASSSTASPPSSSTAIFQPSETVSSTES. The bZIP domain maps to 231 to 294; sequence DEKYWTRRKK…GKCKTIVSKY (64 aa). The segment at 233–253 is basic motif; sequence KYWTRRKKNNVAAKRSRDARR. The tract at residues 254 to 261 is leucine-zipper; it reads LKENQITI.

It belongs to the bZIP family. PAR subfamily. In terms of assembly, binds DNA as a homodimer or a heterodimer. Can form a heterodimer with DBP. In terms of tissue distribution, isoform Alpha and isoform Beta are expressed at high levels in lung, bladder, kidney, gut and brain.

Its subcellular location is the nucleus. In terms of biological role, transcription factor that binds to and transactivates the TSHB promoter. Binds to a minimal DNA-binding sequence 5'-[TC][AG][AG]TTA[TC][AG]-3'. Also activates the telokin promoter in smooth muscle-specific and calcium-dependent manner. The protein is Thyrotroph embryonic factor (Tef) of Mus musculus (Mouse).